The following is a 307-amino-acid chain: Small ribosomal subunit biogenesis GTPase RsgA (307 aa).

Residues 78 to 240 (HKTAFGHLIA…VIDTPGIKEL (163 aa)) enclose the CP-type G domain. Residues 128-131 (NKSD) and 182-190 (GHSGVGKST) contribute to the GTP site. Residues cysteine 264, cysteine 269, histidine 271, and cysteine 277 each coordinate Zn(2+).

It belongs to the TRAFAC class YlqF/YawG GTPase family. RsgA subfamily. As to quaternary structure, monomer. Associates with 30S ribosomal subunit, binds 16S rRNA. The cofactor is Zn(2+).

It is found in the cytoplasm. Functionally, one of several proteins that assist in the late maturation steps of the functional core of the 30S ribosomal subunit. Helps release RbfA from mature subunits. May play a role in the assembly of ribosomal proteins into the subunit. Circularly permuted GTPase that catalyzes slow GTP hydrolysis, GTPase activity is stimulated by the 30S ribosomal subunit. The polypeptide is Small ribosomal subunit biogenesis GTPase RsgA (Cytophaga hutchinsonii (strain ATCC 33406 / DSM 1761 / CIP 103989 / NBRC 15051 / NCIMB 9469 / D465)).